Reading from the N-terminus, the 383-residue chain is Phosphoenolpyruvate/phosphate translocator 2, chloroplastic (383 aa).

The N-terminal 55 residues, 1-55, are a transit peptide targeting the chloroplast; the sequence is MFALTFLNPNPRLPSPLFLAKSTPESALSRRSRAFSSSNSYPWRPNLRFNGFKLK. The next 8 membrane-spanning stretches (helical) occupy residues 76-96, 108-128, 143-163, 179-199, 210-232, 253-273, 299-319, and 350-369; these read GLKL…YNIF, ATVT…MWLL, VIVQ…VSLG, FFTV…WIVC, LASF…SNVT, INLF…LAIL, IMSL…YMIL, and VSPL…YLYS. One can recognise an EamA domain in the interval 93–212; it reads YNIFNKQVLR…PIVAGVSLAS (120 aa).

This sequence belongs to the TPT transporter family. PPT (TC 2.A.7.9) subfamily. In terms of tissue distribution, widely expressed in leaves throughout development. In flowers, expressed in sepals and pistils.

Its subcellular location is the plastid. It is found in the chloroplast membrane. In terms of biological role, phosphoenolpyruvate/phosphate translocator that transports phosphoenolpyruvate (PEP), 2-phosphoglycerate and 3-phosphoglycerate. The protein is Phosphoenolpyruvate/phosphate translocator 2, chloroplastic (PPT2) of Arabidopsis thaliana (Mouse-ear cress).